The chain runs to 752 residues: Photosystem I P700 chlorophyll a apoprotein A1 (752 aa).

8 helical membrane passes run 73-96, 159-182, 198-222, 294-312, 349-372, 388-414, 436-458, and 533-551; these read IFSA…FHGA, LYVT…FHYH, MNHH…HVSL, RAHH…GHMY, WHAQ…HHMY, LCLF…IFMV, AIIS…LYIH, and FLVH…LILL. Residues cysteine 575 and cysteine 584 each contribute to the [4Fe-4S] cluster site. The next 2 membrane-spanning stretches (helical) occupy residues 591-612 and 666-688; these read HVFL…HFSW and LSAY…MFLF. Histidine 677 contacts chlorophyll a'. Chlorophyll a-binding residues include methionine 685 and tyrosine 693. Tryptophan 694 contacts phylloquinone. A helical transmembrane segment spans residues 726 to 746; it reads AVGVAHYLLGGIATTWSFFHA.

The protein belongs to the PsaA/PsaB family. In terms of assembly, the PsaA/B heterodimer binds the P700 chlorophyll special pair and subsequent electron acceptors. PSI consists of a core antenna complex that captures photons, and an electron transfer chain that converts photonic excitation into a charge separation. The eukaryotic PSI reaction center is composed of at least 11 subunits. P700 is a chlorophyll a/chlorophyll a' dimer, A0 is one or more chlorophyll a, A1 is one or both phylloquinones and FX is a shared 4Fe-4S iron-sulfur center. serves as cofactor.

It is found in the plastid. Its subcellular location is the cyanelle thylakoid membrane. It catalyses the reaction reduced [plastocyanin] + hnu + oxidized [2Fe-2S]-[ferredoxin] = oxidized [plastocyanin] + reduced [2Fe-2S]-[ferredoxin]. PsaA and PsaB bind P700, the primary electron donor of photosystem I (PSI), as well as the electron acceptors A0, A1 and FX. PSI is a cytochrome c6-ferredoxin oxidoreductase, converting photonic excitation into a charge separation, which transfers an electron from the donor P700 chlorophyll pair to the spectroscopically characterized acceptors A0, A1, FX, FA and FB in turn. Oxidized P700 is reduced on the lumenal side of the thylakoid membrane by cytochrome c6. In Cyanophora paradoxa, this protein is Photosystem I P700 chlorophyll a apoprotein A1.